The primary structure comprises 509 residues: Proto-oncogene tyrosine-protein kinase LCK (509 aa).

Residue glycine 2 is the site of N-myristoyl glycine attachment. An interactions with CD4 and CD8 region spans residues 2 to 72; it reads GCGCSSHLED…DNLVIALHSY (71 aa). S-palmitoyl cysteine attachment occurs at residues cysteine 3 and cysteine 5. In terms of domain architecture, SH3 spans 61 to 121; sequence LQDNLVIALH…PFNFVAKANS (61 aa). A Glycyl lysine isopeptide (Lys-Gly) (interchain with G-Cter in ubiquitin) cross-link involves residue lysine 99. At serine 102 the chain carries Phosphoserine. Residues 127–224 form the SH2 domain; sequence WFFKNLSRKD…GLCTRLSRPC (98 aa). An interaction with PTPRH region spans residues 154–242; that stretch reads RESESTAGSF…WWEDEWEVPR (89 aa). Phosphothreonine is present on threonine 159. Residue serine 162 is modified to Phosphoserine. Position 192 is a phosphotyrosine (tyrosine 192). Phosphoserine is present on serine 194. One can recognise a Protein kinase domain in the interval 245–498; sequence LKLVERLGAG…YLRSVLEDFF (254 aa). ATP-binding positions include 251 to 259 and lysine 273; that span reads LGAGQFGEV. Residue lysine 276 forms a Glycyl lysine isopeptide (Lys-Gly) (interchain with G-Cter in ubiquitin) linkage. The active-site Proton acceptor is aspartate 364. Tyrosine 394 carries the phosphotyrosine; by autocatalysis modification. The residue at position 505 (tyrosine 505) is a Phosphotyrosine; by CSK.

Belongs to the protein kinase superfamily. Tyr protein kinase family. In terms of assembly, binds to the cytoplasmic domain of cell surface receptors, such as AXL, CD2, CD4, CD5, CD8, CD44, CD45 and CD122. Also binds to effector molecules, such as PI4K, VAV1, RASA1, FYB1 and to other protein kinases including CDK1, RAF1, ZAP70 and SYK. Binds to phosphatidylinositol 3'-kinase (PI3K) from T-lymphocytes through its SH3 domain and to the tyrosine phosphorylated form of KHDRBS1/p70 through its SH2 domain. Interacts with SQSTM1. Interacts with phosphorylated LIME1. Interacts with CBLB and PTPRH. Interacts with RUNX3. Forms a signaling complex with EPHA1, PTK2B and PI3-KINASE; upon activation by EFNA1 which may regulate T-lymphocytes migration. Associates with ZAP70 and RHOH; these interactions allow LCK-mediated RHOH and CD3 subunit phosphorylations in the presence of functional ZAP70. Interacts with Saimiriine herpesvirus 2 TIP. Interacts with UNC119; this interaction plays a crucial role in activation of LCK. Interacts with CEACAM1 (via cytoplasmic domain); mediates CEACAM1 phosphorylation resulting in PTPN6 recruitment that dephosphorylates TCR stimulation-induced CD247 and ZAP70. Interacts with CD160. Interacts with CD48. Post-translationally, autophosphorylated on Tyr-394, increasing enzymatic activity, this site is dephosphorylated by PTN22. Phosphorylated on Tyr-505 by CSK, decreasing activity. Dephosphorylated by PTPRC/CD45. Dephosphorylation at Tyr-394 by PTPN2 negatively regulates T-cells differentiation. Dephosphorylation at Tyr-394 by DUSP22 negatively regulates T-cell receptor signaling. Myristoylation is required prior to palmitoylation. In terms of processing, palmitoylation regulates association with the plasma membrane and could be mediated by ZDHHC2. Post-translationally, 'Lys-63'-linked ubiquitinated at Lys-99 and Lys-276 by UBR2; this modification is required for autophosphorylation at Tyr-394. As to expression, expressed specifically in lymphoid cells.

The protein resides in the cell membrane. Its subcellular location is the cytoplasm. The protein localises to the cytosol. It catalyses the reaction L-tyrosyl-[protein] + ATP = O-phospho-L-tyrosyl-[protein] + ADP + H(+). With respect to regulation, the relative activities of the inhibitory tyrosine-protein kinase CSK and the activating tyrosine-protein phosphatase PTPRC/CD45 determine the level of LCK activity. These interactions allow rapid and efficient activation of LCK in response to TCR stimulation. Functionally, non-receptor tyrosine-protein kinase that plays an essential role in the selection and maturation of developing T-cells in the thymus and in the function of mature T-cells. Plays a key role in T-cell antigen receptor (TCR)-linked signal transduction pathways. Constitutively associated with the cytoplasmic portions of the CD4 and CD8 surface receptors. Association of the TCR with a peptide antigen-bound MHC complex facilitates the interaction of CD4 and CD8 with MHC class II and class I molecules, respectively, thereby recruiting the associated LCK protein to the vicinity of the TCR/CD3 complex. LCK then phosphorylates tyrosine residues within the immunoreceptor tyrosine-based activation motifs (ITAM) of the cytoplasmic tails of the TCR-gamma chains and CD3 subunits, initiating the TCR/CD3 signaling pathway. Once stimulated, the TCR recruits the tyrosine kinase ZAP70, that becomes phosphorylated and activated by LCK. Following this, a large number of signaling molecules are recruited, ultimately leading to lymphokine production. LCK also contributes to signaling by other receptor molecules. Associates directly with the cytoplasmic tail of CD2, which leads to hyperphosphorylation and activation of LCK. Also plays a role in the IL2 receptor-linked signaling pathway that controls the T-cell proliferative response. Binding of IL2 to its receptor results in increased activity of LCK. Is expressed at all stages of thymocyte development and is required for the regulation of maturation events that are governed by both pre-TCR and mature alpha beta TCR. Phosphorylates other substrates including RUNX3, PTK2B/PYK2, the microtubule-associated protein MAPT, RHOH or TYROBP. The chain is Proto-oncogene tyrosine-protein kinase LCK (LCK) from Saimiri sciureus (Common squirrel monkey).